The chain runs to 182 residues: Ribulose bisphosphate carboxylase small subunit, chloroplastic 6 (182 aa).

Residues 1–41 constitute a chloroplast transit peptide; that stretch reads MAATMMSKTIISSKQCSKPIAPPKVSINKGFVNTSAAIKNR.

It belongs to the RuBisCO small chain family. In terms of assembly, heterohexadecamer of 8 large and 8 small subunits.

It is found in the plastid. Its subcellular location is the chloroplast. RuBisCO catalyzes two reactions: the carboxylation of D-ribulose 1,5-bisphosphate, the primary event in carbon dioxide fixation, as well as the oxidative fragmentation of the pentose substrate. Both reactions occur simultaneously and in competition at the same active site. Although the small subunit is not catalytic it is essential for maximal activity. The chain is Ribulose bisphosphate carboxylase small subunit, chloroplastic 6 from Acetabularia peniculus (Green alga).